A 145-amino-acid chain; its full sequence is D-aminoacyl-tRNA deacylase (145 aa).

The Gly-cisPro motif, important for rejection of L-amino acids motif lies at 137–138 (GP).

This sequence belongs to the DTD family. Homodimer.

The protein resides in the cytoplasm. The catalysed reaction is glycyl-tRNA(Ala) + H2O = tRNA(Ala) + glycine + H(+). The enzyme catalyses a D-aminoacyl-tRNA + H2O = a tRNA + a D-alpha-amino acid + H(+). In terms of biological role, an aminoacyl-tRNA editing enzyme that deacylates mischarged D-aminoacyl-tRNAs. Also deacylates mischarged glycyl-tRNA(Ala), protecting cells against glycine mischarging by AlaRS. Acts via tRNA-based rather than protein-based catalysis; rejects L-amino acids rather than detecting D-amino acids in the active site. By recycling D-aminoacyl-tRNA to D-amino acids and free tRNA molecules, this enzyme counteracts the toxicity associated with the formation of D-aminoacyl-tRNA entities in vivo and helps enforce protein L-homochirality. This chain is D-aminoacyl-tRNA deacylase, found in Francisella tularensis subsp. holarctica (strain FTNF002-00 / FTA).